The chain runs to 256 residues: Autophagy-related protein 40 (256 aa).

Positions 1 to 16 (MFNLILWPLFLLTSVA) are cleaved as a signal peptide. Residues 17-67 (IPLQLTLEVVYLTSSVDFSKASAAKTATSLGQSPVVITIYKSLLKYWSLYE) are Lumenal-facing. A helical membrane pass occupies residues 68-88 (FIHFIYLYTPIDAFLNFLPFT). At 89-256 (SLLMSFGSIC…DILDETTELD (168 aa)) the chain is on the cytoplasmic side. Residues 197–243 (QPQGDKNRYQNGDRESTKNGAAYQKSSQQSSSFEQNFTSTEFPNDYD) are disordered. The segment covering 199 to 213 (QGDKNRYQNGDREST) has biased composition (basic and acidic residues). Residues 222–238 (SSQQSSSFEQNFTSTEF) are compositionally biased toward low complexity. Residues 242 to 245 (YDFM) carry the ATG8-binding motif.

Interacts with ATG8 and ATG11.

It localises to the endoplasmic reticulum membrane. The protein localises to the preautophagosomal structure membrane. Functionally, acts as a receptor for reticulophagy. Directs autophagic sequestration of folded tubules/sheets derived from the cortical endoplasmic reticulum (cER) and the cytoplasmic endoplasmic reticulum (cytoER) into autophagosomes. Is not required for the cytoplasm-to-vacuole targeting pathway, mitophagy, pexophagy, and non-selective autophagy. The sequence is that of Autophagy-related protein 40 from Saccharomyces cerevisiae (strain ATCC 204508 / S288c) (Baker's yeast).